A 156-amino-acid polypeptide reads, in one-letter code: Small ribosomal subunit protein uS7 (156 aa).

The protein belongs to the universal ribosomal protein uS7 family. In terms of assembly, part of the 30S ribosomal subunit. Contacts proteins S9 and S11.

In terms of biological role, one of the primary rRNA binding proteins, it binds directly to 16S rRNA where it nucleates assembly of the head domain of the 30S subunit. Is located at the subunit interface close to the decoding center, probably blocks exit of the E-site tRNA. The polypeptide is Small ribosomal subunit protein uS7 (Oleidesulfovibrio alaskensis (strain ATCC BAA-1058 / DSM 17464 / G20) (Desulfovibrio alaskensis)).